The chain runs to 747 residues: MRRETVGEFSSDDDDDILLELGTRPPRFTQIPPSSAALQTQIPTTLEVTTTTLNNKQSKNDNQLVNQLNKAQGEASMLRDKINFLNIEREKEKNIQAVKVNELQVKHLQELAKLKQELQKLEDEKKFLQMEARGKSKREVITNVKPPSTTLSTNTNTITPDSSSVAIEAKPQSPQSKKRKISDNLLKKNMVPLNPNRIIPDETSLFLESILLHQIIGADLSTIEILNRLKLDYITEFKFKNFVIAKGAPIGKSIVSLLLRCKKTLTLDRFIDTLLEDIAVLIKEISVHPNESKLAVPFLVALMYQIVQFRPSATHNLALKDCFLFICDLIRIYHHVLKVPIHESNMNLHVEPQIFQYELIDYLIISYSFDLLEGILRVLQSHPKQTYMEFFDENILKSFEFVYKLALTISYKPMVNVIFSAVEVVNIITSIILNMDNSSDLKSLISGSWWRDCITRLYALLEKEIKSGDVYNENVDTTTLHMSKYHDFFGLIRNIGDNELGGLISKLIYTDRLQSVPRVISKEDIGMDSDKFTAPIIGYKMEKWLLKLKDEVLNIFENLLMIYGDDATIVNGEMLIHSSKFLSREQALMIERYVGQDSPNLDLRCHLIEHTLTIIYRLWKDHFKQLREEQIKQVESQLIMSLWRFLVCQTETVTANEREMRDHRHLVDSLHDLTIKDQASYYEDAFEDLPEYIEEELKMQLNKRTGRIMQVKYDEKFQEMARTILESKSFDLTTLEEADSLYISMGL.

Residues S10, S11, and S76 each carry the phosphoserine modification. The stretch at 62 to 139 (NQLVNQLNKA…MEARGKSKRE (78 aa)) forms a coiled coil. The tract at residues 145–180 (KPPSTTLSTNTNTITPDSSSVAIEAKPQSPQSKKRK) is disordered. Residues 146–160 (PPSTTLSTNTNTITP) are compositionally biased toward low complexity.

In terms of assembly, forms a complex with MEC1. In terms of processing, phosphorylated by MEC1 in a cell cycle dependent manner and in response to DNA damage.

It localises to the cytoplasm. It is found in the nucleus. Forms a complex with the serine/threonine kinase MEC1 which activates checkpoint signaling upon genotoxic stresses. The MEC1-LCD1 complex is recruited by the single-strand-binding protein complex RPA to DNA lesions in order to initiate the DNA repair by homologous recombination, after the MRX-complex and TEL1 are displaced. Required for the recruitment of MEC1 to DNA lesions, the activation of CHK1 and RAD53 kinases and phosphorylation of RAD9 in response to DNA damage. Required for cell growth and meiotic recombination. This Saccharomyces cerevisiae (strain ATCC 204508 / S288c) (Baker's yeast) protein is DNA damage checkpoint protein LCD1 (LCD1).